The following is a 278-amino-acid chain: NAD kinase (278 aa).

Aspartate 67 (proton acceptor) is an active-site residue. NAD(+) is bound by residues 67-68 (DG), arginine 72, 137-138 (NE), lysine 148, arginine 165, aspartate 167, 178-183 (TGYAMS), alanine 202, and glutamine 237.

Belongs to the NAD kinase family. The cofactor is a divalent metal cation.

The protein resides in the cytoplasm. It catalyses the reaction NAD(+) + ATP = ADP + NADP(+) + H(+). Functionally, involved in the regulation of the intracellular balance of NAD and NADP, and is a key enzyme in the biosynthesis of NADP. Catalyzes specifically the phosphorylation on 2'-hydroxyl of the adenosine moiety of NAD to yield NADP. This chain is NAD kinase, found in Thermococcus kodakarensis (strain ATCC BAA-918 / JCM 12380 / KOD1) (Pyrococcus kodakaraensis (strain KOD1)).